Consider the following 183-residue polypeptide: Ribosome-recycling factor (183 aa).

It belongs to the RRF family.

The protein localises to the cytoplasm. Responsible for the release of ribosomes from messenger RNA at the termination of protein biosynthesis. May increase the efficiency of translation by recycling ribosomes from one round of translation to another. In Bifidobacterium longum (strain DJO10A), this protein is Ribosome-recycling factor.